A 159-amino-acid chain; its full sequence is Phosphopantetheine adenylyltransferase (159 aa).

Substrate is bound at residue Thr-10. ATP contacts are provided by residues Thr-10–Phe-11 and His-18. Substrate is bound by residues Lys-42, Leu-74, and Arg-88. ATP is bound by residues Gly-89–Arg-91, Glu-99, and Phe-124–Ser-130.

Belongs to the bacterial CoaD family. Homohexamer. It depends on Mg(2+) as a cofactor.

It is found in the cytoplasm. It carries out the reaction (R)-4'-phosphopantetheine + ATP + H(+) = 3'-dephospho-CoA + diphosphate. It participates in cofactor biosynthesis; coenzyme A biosynthesis; CoA from (R)-pantothenate: step 4/5. In terms of biological role, reversibly transfers an adenylyl group from ATP to 4'-phosphopantetheine, yielding dephospho-CoA (dPCoA) and pyrophosphate. The protein is Phosphopantetheine adenylyltransferase of Thioalkalivibrio sulfidiphilus (strain HL-EbGR7).